The primary structure comprises 479 residues: Lincomycin resistance protein LmrB (479 aa).

14 consecutive transmembrane segments (helical) span residues Met-19–Thr-41, Trp-56–Trp-78, Phe-85–Phe-107, Arg-112–Phe-134, Ala-141–Phe-160, Trp-170–Met-192, Val-205–Phe-222, Trp-232–Phe-251, Met-272–Leu-294, Leu-304–Val-326, Trp-338–Ser-355, Thr-360–Met-382, Ile-403–Ala-425, and Ala-449–Phe-471.

It belongs to the major facilitator superfamily. EmrB family.

It localises to the cell membrane. Proton-dependent transporter. May mediate the efflux of lincomycin. This chain is Lincomycin resistance protein LmrB (lmrB), found in Bacillus subtilis (strain 168).